A 547-amino-acid chain; its full sequence is Chaperonin GroEL (547 aa).

ATP contacts are provided by residues 30–33 (TLGP), lysine 51, 87–91 (DGTTT), glycine 415, 479–481 (NAA), and aspartate 495.

The protein belongs to the chaperonin (HSP60) family. In terms of assembly, forms a cylinder of 14 subunits composed of two heptameric rings stacked back-to-back. Interacts with the co-chaperonin GroES.

It is found in the cytoplasm. It carries out the reaction ATP + H2O + a folded polypeptide = ADP + phosphate + an unfolded polypeptide.. Functionally, together with its co-chaperonin GroES, plays an essential role in assisting protein folding. The GroEL-GroES system forms a nano-cage that allows encapsulation of the non-native substrate proteins and provides a physical environment optimized to promote and accelerate protein folding. This Cupriavidus metallidurans (strain ATCC 43123 / DSM 2839 / NBRC 102507 / CH34) (Ralstonia metallidurans) protein is Chaperonin GroEL.